We begin with the raw amino-acid sequence, 647 residues long: Protein RAD61 (647 aa).

Positions methionine 1 to asparagine 90 are disordered. Polar residues predominate over residues aspartate 66–leucine 82.

It localises to the nucleus. In terms of biological role, involved in resistance to ionizing radiation. The polypeptide is Protein RAD61 (RAD61) (Saccharomyces cerevisiae (strain ATCC 204508 / S288c) (Baker's yeast)).